The primary structure comprises 153 residues: Ribonuclease H (153 aa).

Residues 4 to 145 enclose the RNase H type-1 domain; sequence SVDSVELFTD…ADQLANRGVD (142 aa). 4 residues coordinate Mg(2+): aspartate 13, glutamate 51, aspartate 73, and aspartate 137.

It belongs to the RNase H family. In terms of assembly, monomer. Mg(2+) is required as a cofactor.

It is found in the cytoplasm. The catalysed reaction is Endonucleolytic cleavage to 5'-phosphomonoester.. Its function is as follows. Endonuclease that specifically degrades the RNA of RNA-DNA hybrids. This chain is Ribonuclease H, found in Pseudomonas fluorescens (strain Pf0-1).